The following is a 209-amino-acid chain: Kynurenine formamidase (209 aa).

Substrate is bound at residue Trp20. Residues His50, His54, and Asp56 each coordinate Zn(2+). The active-site Proton donor/acceptor is His60. The Zn(2+) site is built by His161 and Glu173.

Belongs to the Cyclase 1 superfamily. KynB family. In terms of assembly, homodimer. Zn(2+) is required as a cofactor.

It catalyses the reaction N-formyl-L-kynurenine + H2O = L-kynurenine + formate + H(+). It functions in the pathway amino-acid degradation; L-tryptophan degradation via kynurenine pathway; L-kynurenine from L-tryptophan: step 2/2. In terms of biological role, catalyzes the hydrolysis of N-formyl-L-kynurenine to L-kynurenine, the second step in the kynurenine pathway of tryptophan degradation. The polypeptide is Kynurenine formamidase (Bacillus cereus (strain ATCC 10987 / NRS 248)).